A 190-amino-acid polypeptide reads, in one-letter code: MNALHRIGAGTLLAVLLAFGLTGCGEKEEVQQSLEPVAFHDSDECHVCGMIITDFPGPKGQAVEKRGVKKFCSTAEMLGWWLQPENRLLDAKLYVHDMGRSVWEKPDDGHLIDATSAYYVVGTSLKGAMGASLASFAEEQDAKALAGMHGGRVLRFEEIDQALLQEAASMQHGGMHDHAPNGAHNAHAGH.

Residues 1–23 form the signal peptide; the sequence is MNALHRIGAGTLLAVLLAFGLTG. Cysteine 24 carries N-palmitoyl cysteine lipidation. The S-diacylglycerol cysteine moiety is linked to residue cysteine 24. Residues 170-190 are disordered; sequence MQHGGMHDHAPNGAHNAHAGH. The segment covering 180 to 190 has biased composition (low complexity); that stretch reads PNGAHNAHAGH.

It belongs to the NosL family. As to quaternary structure, monomer.

The protein localises to the cell membrane. Its function is as follows. May act as a metallochaperone involved in nitrous oxide reductase assembly. Specifically binds Cu(+). The chain is Copper-binding lipoprotein NosL from Stutzerimonas stutzeri (Pseudomonas stutzeri).